We begin with the raw amino-acid sequence, 73 residues long: Translation initiation factor IF-1 3 (73 aa).

In terms of domain architecture, S1-like spans 1–72; that stretch reads MAKEELVEFG…TKGRINYRHK (72 aa).

Belongs to the IF-1 family. As to quaternary structure, component of the 30S ribosomal translation pre-initiation complex which assembles on the 30S ribosome in the order IF-2 and IF-3, IF-1 and N-formylmethionyl-tRNA(fMet); mRNA recruitment can occur at any time during PIC assembly.

The protein resides in the cytoplasm. Functionally, one of the essential components for the initiation of protein synthesis. Stabilizes the binding of IF-2 and IF-3 on the 30S subunit to which N-formylmethionyl-tRNA(fMet) subsequently binds. Helps modulate mRNA selection, yielding the 30S pre-initiation complex (PIC). Upon addition of the 50S ribosomal subunit IF-1, IF-2 and IF-3 are released leaving the mature 70S translation initiation complex. In Cupriavidus metallidurans (strain ATCC 43123 / DSM 2839 / NBRC 102507 / CH34) (Ralstonia metallidurans), this protein is Translation initiation factor IF-1 3.